The primary structure comprises 238 residues: Laccase-S (238 aa).

Plastocyanin-like domains follow at residues 4–87 (NVIA…YDPA) and 100–238 (HTII…IARY). Residue asparagine 8 is glycosylated (N-linked (GlcNAc...) asparagine). The Cu cation site is built by histidine 21, histidine 23, histidine 66, and histidine 68. The cysteines at positions 74 and 162 are disulfide-linked. The N-linked (GlcNAc...) asparagine glycan is linked to asparagine 165.

The protein belongs to the multicopper oxidase family. As to quaternary structure, monomer. It depends on Cu cation as a cofactor.

The protein localises to the secreted. It catalyses the reaction 4 hydroquinone + O2 = 4 benzosemiquinone + 2 H2O. Its activity is regulated as follows. Activity is strongly promoted by toluene. Activity is promoted by magnesium, potassium, cadmium, zinc, nickel, sodium, lead and manganese ions. Completely inhibited by IAA (cysteine protease inhibitor), PMSF (serine protease inhibitor), DEP (histidine protease inhibitor) and NAI (tyrosine protease inhibitor). Inhibited by ethanol, acetone, SDS, and EDTA. Activity is strongly inhibited by mercury ions. Also inhibited by lithium, aluminum, calcium, barium and iron ions. Its function is as follows. Lignin degradation and detoxification of lignin-derived products. Has activity towards 2,2'-azino-bis(3-ethylbenzothiazoline-6-sulfonic acid) (ABTS). The polypeptide is Laccase-S (Trametes hirsuta (White-rot fungus)).